We begin with the raw amino-acid sequence, 239 residues long: MIPTNDAHITLMNYDDPLEWAQSVTRELENILLQEITQRGRASLLLSGGTTPALVYETLATRPLDWSKIDIGLVDERWLSPQDKDSNAWLVRHTLLEHAKHATFLPLIRPGKTLNQCVHDANLQITHSPPPCAVVLGMGNDGHTASLFPGSLDLQKAINTPQPYVALDATGCPGAGVWPLRITLTPAGLNNIPHRLLLLRGKQKLKVLETALSCKDALDYPIRTAIDLPNARLRVHWCA.

Belongs to the glucosamine/galactosamine-6-phosphate isomerase family. 6-phosphogluconolactonase subfamily.

It carries out the reaction 6-phospho-D-glucono-1,5-lactone + H2O = 6-phospho-D-gluconate + H(+). It participates in carbohydrate degradation; pentose phosphate pathway; D-ribulose 5-phosphate from D-glucose 6-phosphate (oxidative stage): step 2/3. Functionally, hydrolysis of 6-phosphogluconolactone to 6-phosphogluconate. The chain is 6-phosphogluconolactonase (pgl) from Xylella fastidiosa (strain Temecula1 / ATCC 700964).